Consider the following 388-residue polypeptide: Chitinase 4 (388 aa).

Positions 22 to 375 (FKTCVYFSNW…KNFVDQLGGV (354 aa)) constitute a GH18 domain. Residues Asn30 and Asn82 are each glycosylated (N-linked (GlcNAc...) asparagine). Chitin-binding positions include 82-83 (NQ) and 109-112 (GGWG). 2 N-linked (GlcNAc...) asparagine glycosylation sites follow: Asn123 and Asn132. Residue Glu151 is the Proton donor of the active site. Position 152 (Tyr152) interacts with chitin. An N-linked (GlcNAc...) asparagine glycan is attached at Asn155. 208–211 (MCYD) is a chitin binding site. N-linked (GlcNAc...) asparagine glycosylation occurs at Asn237. Residue Trp350 coordinates chitin.

Belongs to the glycosyl hydrolase 18 family. Chitinase class V subfamily.

It is found in the secreted. It carries out the reaction Random endo-hydrolysis of N-acetyl-beta-D-glucosaminide (1-&gt;4)-beta-linkages in chitin and chitodextrins.. Chitinase involved in the remodeling of chitin in the fungal cell wall. Plays a role in sporulation. The sequence is that of Chitinase 4 (CHT4) from Candida albicans (strain SC5314 / ATCC MYA-2876) (Yeast).